Consider the following 368-residue polypeptide: Ferredoxin--NADP reductase 2 (368 aa).

Positions 57, 65, 70, 110, 145, 310, and 351 each coordinate FAD.

The protein belongs to the ferredoxin--NADP reductase type 2 family. Homodimer. The cofactor is FAD.

It catalyses the reaction 2 reduced [2Fe-2S]-[ferredoxin] + NADP(+) + H(+) = 2 oxidized [2Fe-2S]-[ferredoxin] + NADPH. The chain is Ferredoxin--NADP reductase 2 from Cupriavidus pinatubonensis (strain JMP 134 / LMG 1197) (Cupriavidus necator (strain JMP 134)).